We begin with the raw amino-acid sequence, 130 residues long: MIKMAVKFVVVMIVFAQILAPIAEAAQGKAVYYDPPYTRSACYGTQRETLVVGVKNNLWQNGRACGRRYRVRCIGATYNFDRACTGRTVDVKVVDFCREPCNGDLNLSRDAFRVIANTDAGNIRVVYTPI.

An N-terminal signal peptide occupies residues 1 to 25 (MIKMAVKFVVVMIVFAQILAPIAEA). The region spanning 28-130 (GKAVYYDPPY…GNIRVVYTPI (103 aa)) is the Expansin-like EG45 domain. N106 carries an N-linked (GlcNAc...) asparagine glycan.

In terms of tissue distribution, expressed in unstressed leaves.

It is found in the secreted. Plays a systemic role in water and solute homeostasis. This Arabidopsis thaliana (Mouse-ear cress) protein is EG45-like domain containing protein 2 (EGC2).